The chain runs to 23 residues: U3-ctenitoxin-Co1a (23 aa).

2 disulfide bridges follow: Cys-2–Cys-17 and Cys-9–Cys-22.

As to expression, expressed by the venom gland.

Its subcellular location is the secreted. In terms of biological role, antagonist of L-type calcium channels (Cav1/CACNA1). This chain is U3-ctenitoxin-Co1a, found in Ctenus ornatus (Brazilian spider).